Reading from the N-terminus, the 419-residue chain is Histidine--tRNA ligase (419 aa).

It belongs to the class-II aminoacyl-tRNA synthetase family. As to quaternary structure, homodimer.

The protein resides in the cytoplasm. It catalyses the reaction tRNA(His) + L-histidine + ATP = L-histidyl-tRNA(His) + AMP + diphosphate + H(+). The chain is Histidine--tRNA ligase from Desulfatibacillum aliphaticivorans.